We begin with the raw amino-acid sequence, 450 residues long: Tubulin alpha-6 chain (450 aa).

Residues Q11, E71, G144, T145, T179, N206, and N228 each contribute to the GTP site. E71 provides a ligand contact to Mg(2+). E254 is a catalytic residue. Position 349 is a phosphothreonine (T349). A disordered region spans residues 430–450 (KDYEEVGAEGGDDEDDEGEEY). Positions 431-450 (DYEEVGAEGGDDEDDEGEEY) are enriched in acidic residues.

Belongs to the tubulin family. In terms of assembly, dimer of alpha and beta chains. A typical microtubule is a hollow water-filled tube with an outer diameter of 25 nm and an inner diameter of 15 nM. Alpha-beta heterodimers associate head-to-tail to form protofilaments running lengthwise along the microtubule wall with the beta-tubulin subunit facing the microtubule plus end conferring a structural polarity. Microtubules usually have 13 protofilaments but different protofilament numbers can be found in some organisms and specialized cells. Interacts with TFCB. The cofactor is Mg(2+). Undergoes a tyrosination/detyrosination cycle, the cyclic removal and re-addition of a C-terminal tyrosine residue by the enzymes tubulin tyrosine carboxypeptidase (TTCP) and tubulin tyrosine ligase (TTL), respectively. Post-translationally, acetylation of alpha chains at Lys-40 stabilizes microtubules and affects affinity and processivity of microtubule motors. This modification has a role in multiple cellular functions, ranging from cell motility, cell cycle progression or cell differentiation to intracellular trafficking and signaling.

The protein localises to the cytoplasm. The protein resides in the cytoskeleton. The enzyme catalyses GTP + H2O = GDP + phosphate + H(+). Tubulin is the major constituent of microtubules, a cylinder consisting of laterally associated linear protofilaments composed of alpha- and beta-tubulin heterodimers. Microtubules grow by the addition of GTP-tubulin dimers to the microtubule end, where a stabilizing cap forms. Below the cap, tubulin dimers are in GDP-bound state, owing to GTPase activity of alpha-tubulin. In Arabidopsis thaliana (Mouse-ear cress), this protein is Tubulin alpha-6 chain (TUBA6).